Reading from the N-terminus, the 200-residue chain is Ras-related protein RABF2b (200 aa).

Gly17–Ser25 provides a ligand contact to GTP. The short motif at Gln39–Phe47 is the Effector region element. GTP contacts are provided by residues Asp65–Gln69, Asn123–Asp126, and Ser153–Ala154. Residues Cys198 and Cys199 are each lipidated (S-geranylgeranyl cysteine).

Belongs to the small GTPase superfamily. Rab family. In terms of assembly, interacts with VPS9A homodimer. Interacts with TCTP1. Interacts with MON1. Interacts with EREX (via PX domain). Binds to VPS3. Expressed in roots and actively dividing cells.

The protein localises to the early endosome membrane. It localises to the endosome membrane. The protein resides in the prevacuolar compartment membrane. Its subcellular location is the endosome. It is found in the multivesicular body membrane. The protein localises to the cell membrane. It localises to the cytoplasm. Its activity is regulated as follows. Regulated by guanine nucleotide exchange factors (GEFs) which promote the exchange of bound GDP for free GTP. In terms of biological role, endosomal protein that may be involved in endocytosis. Involved in the trafficking of proteins from prevacuolar compartments (PVCs) to vacuoles. May activate the MON1-CCZ1 complex which acts as guanine nucleotide exchange factors (GEF) for Rab7 protein family, and serves as a link between Rab5 and Rab7 families in PVCs, and mediates PVC maturation. Involved in vacuolar transport of storage proteins with EREX as effector. Regulates membrane trafficking to protein storage vacuoles (PSVs). The chain is Ras-related protein RABF2b from Arabidopsis thaliana (Mouse-ear cress).